We begin with the raw amino-acid sequence, 307 residues long: Holliday junction branch migration complex subunit RuvB (307 aa).

Positions 1–167 are large ATPase domain (RuvB-L); it reads MKLQIKPPNN…FGMILNIDYY (167 aa). ATP contacts are provided by residues I5, G48, K51, T52, T53, 114-116, R157, Y167, and R204; that span reads DDF. T52 is a binding site for Mg(2+). The interval 168-233 is small ATPAse domain (RuvB-S); it reads SNQEIERIVS…DLAALFKSLM (66 aa). The head domain (RuvB-H) stretch occupies residues 236 to 307; the sequence is KNGLQSIDVQ…RTGRNYLTSC (72 aa). DNA contacts are provided by K289 and R294.

It belongs to the RuvB family. In terms of assembly, homohexamer. Forms an RuvA(8)-RuvB(12)-Holliday junction (HJ) complex. HJ DNA is sandwiched between 2 RuvA tetramers; dsDNA enters through RuvA and exits via RuvB. An RuvB hexamer assembles on each DNA strand where it exits the tetramer. Each RuvB hexamer is contacted by two RuvA subunits (via domain III) on 2 adjacent RuvB subunits; this complex drives branch migration. In the full resolvosome a probable DNA-RuvA(4)-RuvB(12)-RuvC(2) complex forms which resolves the HJ.

It is found in the cytoplasm. The enzyme catalyses ATP + H2O = ADP + phosphate + H(+). In terms of biological role, the RuvA-RuvB-RuvC complex processes Holliday junction (HJ) DNA during genetic recombination and DNA repair, while the RuvA-RuvB complex plays an important role in the rescue of blocked DNA replication forks via replication fork reversal (RFR). RuvA specifically binds to HJ cruciform DNA, conferring on it an open structure. The RuvB hexamer acts as an ATP-dependent pump, pulling dsDNA into and through the RuvAB complex. RuvB forms 2 homohexamers on either side of HJ DNA bound by 1 or 2 RuvA tetramers; 4 subunits per hexamer contact DNA at a time. Coordinated motions by a converter formed by DNA-disengaged RuvB subunits stimulates ATP hydrolysis and nucleotide exchange. Immobilization of the converter enables RuvB to convert the ATP-contained energy into a lever motion, pulling 2 nucleotides of DNA out of the RuvA tetramer per ATP hydrolyzed, thus driving DNA branch migration. The RuvB motors rotate together with the DNA substrate, which together with the progressing nucleotide cycle form the mechanistic basis for DNA recombination by continuous HJ branch migration. Branch migration allows RuvC to scan DNA until it finds its consensus sequence, where it cleaves and resolves cruciform DNA. The chain is Holliday junction branch migration complex subunit RuvB from Mycoplasma pneumoniae (strain ATCC 29342 / M129 / Subtype 1) (Mycoplasmoides pneumoniae).